Here is a 556-residue protein sequence, read N- to C-terminus: Vetispiradiene synthase 1 (556 aa).

Aspartate 309, aspartate 313, aspartate 452, threonine 456, and glutamate 460 together coordinate Mg(2+). A DDXXD motif motif is present at residues 309–313 (DDTFD).

Belongs to the terpene synthase family. Tpsa subfamily. Requires Mg(2+) as cofactor.

It localises to the cytoplasm. The enzyme catalyses (2E,6E)-farnesyl diphosphate = (-)-vetispiradiene + diphosphate. It functions in the pathway secondary metabolite biosynthesis; terpenoid biosynthesis. Its function is as follows. Sesquiterpene synthase that catalyzes the formation of vetispiradiene from trans,trans-farnesyl diphosphate. The initial internal cyclization produces the monocyclic intermediate germacrene A. In Solanum tuberosum (Potato), this protein is Vetispiradiene synthase 1 (PVS1).